The chain runs to 194 residues: MSALWLLLGLLALMDLSESSNWGCYGNIQSLDTPGASCGIGRRHGLNYCGVRASERLAEIDMPYLLKYQPMMQTIGQKYCMDPAVIAGVLSRKSPGDKILVNMGDRTSMVQDPGSQAPTSWISESQVSQTTEVLTTRIKEIQRRFPTWTPDQYLRGGLCAYSGGAGYVRSSQDLSCDFCNDVLARAKYLKRHGF.

The first 19 residues, 1 to 19, serve as a signal peptide directing secretion; that stretch reads MSALWLLLGLLALMDLSES. 2 cysteine pairs are disulfide-bonded: C24–C80 and C38–C49.

It belongs to the glycosyl hydrolase 23 family.

Its subcellular location is the secreted. The chain is Lysozyme g-like protein 1 (LYG1) from Homo sapiens (Human).